An 864-amino-acid polypeptide reads, in one-letter code: Leucine--tRNA ligase (864 aa).

A 'HIGH' region motif is present at residues 42-52 (PYPSGKLHMGH). The short motif at 624 to 628 (KMSKS) is the 'KMSKS' region element. Lysine 627 is a binding site for ATP.

This sequence belongs to the class-I aminoacyl-tRNA synthetase family.

The protein resides in the cytoplasm. It carries out the reaction tRNA(Leu) + L-leucine + ATP = L-leucyl-tRNA(Leu) + AMP + diphosphate. The protein is Leucine--tRNA ligase of Burkholderia pseudomallei (strain 1710b).